Here is a 304-residue protein sequence, read N- to C-terminus: tRNA pseudouridine synthase B (304 aa).

D38 (nucleophile) is an active-site residue.

The protein belongs to the pseudouridine synthase TruB family. Type 1 subfamily.

It carries out the reaction uridine(55) in tRNA = pseudouridine(55) in tRNA. In terms of biological role, responsible for synthesis of pseudouridine from uracil-55 in the psi GC loop of transfer RNAs. The protein is tRNA pseudouridine synthase B of Listeria innocua serovar 6a (strain ATCC BAA-680 / CLIP 11262).